The following is a 345-amino-acid chain: MPYEKELAAAKKAVSLAARLSQEVQKSLLQSDVRSKSDKSPVTAADYGSQAVISHVLERELHPEPLYLVAEENAEDLHKNGAEEFLESITKLVNNALASDDSYANSSLSMDDVRKAIDHGRSQGGSSGRHWILDPVDGTRGFVKGEEYAVALALLVEGKVVLGVMACPKLENHKSSSSGCLFFATVGEGAYVQSLEGDSHPPQKVQVSNIENPEEATFVESSHKPIPIHSSIANKLGIKAPPLRIHSQVKYAALARGDAEIYLRFTLKGYREFIWNHAAGAIITTEAGGVVCDADGNPLDFSRGNHLEHKTGIVVSTKNLMPRLLKAIRESIEEEMLLSETQLKL.

The active-site Proton acceptor is the Asp46. Residues Glu71, Asp134, Val136, and Asp137 each contribute to the Mg(2+) site. Thr139 (proton acceptor) is an active-site residue. Residues Thr139, Ser247, Lys250, and Arg264 each coordinate adenosine 3',5'-bisphosphate. Ser247, Lys250, and Arg264 together coordinate AMP.

It belongs to the inositol monophosphatase superfamily. The cofactor is Mg(2+).

It carries out the reaction 3'-phosphoadenylyl sulfate + H2O = adenosine 5'-phosphosulfate + phosphate. The catalysed reaction is adenosine 3',5'-bisphosphate + H2O = AMP + phosphate. It catalyses the reaction adenosine 2',5'-bisphosphate + H2O = AMP + phosphate. The enzyme catalyses 1D-myo-inositol 1,4-bisphosphate + H2O = 1D-myo-inositol 4-phosphate + phosphate. It carries out the reaction 1D-myo-inositol 1,3,4-trisphosphate + H2O = 1D-myo-inositol 3,4-bisphosphate + phosphate. Its pathway is signal transduction; phosphatidylinositol signaling pathway. Functionally, phosphatase that converts adenosine 3'-phosphate 5'-phosphosulfate (PAPS) to adenosine 5'-phosphosulfate (APS) and 3'(2')-phosphoadenosine 5'-phosphate (PAP) to AMP. Is also able to hydrolyze inositol 1,4-bisphosphate and inositol 1,3,4-trisphosphate. This chain is Probable 3'(2'),5'-bisphosphate nucleotidase 4 (SAL4), found in Arabidopsis thaliana (Mouse-ear cress).